Consider the following 206-residue polypeptide: RNA-free ribonuclease P (206 aa).

A disordered region spans residues 187-206; the sequence is NLAGDDPGHAPPCGPDQPAG. The span at 195–206 shows a compositional bias: pro residues; the sequence is HAPPCGPDQPAG.

The protein belongs to the HARP family.

The catalysed reaction is Endonucleolytic cleavage of RNA, removing 5'-extranucleotides from tRNA precursor.. RNA-free RNase P that catalyzes the removal of the 5'-leader sequence from pre-tRNA to produce the mature 5'-terminus. The chain is RNA-free ribonuclease P from Halorhodospira halophila (strain DSM 244 / SL1) (Ectothiorhodospira halophila (strain DSM 244 / SL1)).